A 287-amino-acid polypeptide reads, in one-letter code: Kit ligand (287 aa).

A signal peptide spans 1–25 (MKKAQTWIITCFCLQLLLLNPLVKT). Residues 26–225 (QSSCGNPVTD…LGFISSSSLQ (200 aa)) lie on the Extracellular side of the membrane. Disulfide bonds link cysteine 29-cysteine 117 and cysteine 68-cysteine 167. 6 N-linked (GlcNAc...) asparagine glycosylation sites follow: asparagine 100, asparagine 106, asparagine 149, asparagine 178, asparagine 200, and asparagine 206. The chain crosses the membrane as a helical span at residues 226–246 (GISIALTSLLSLLIGFILGVI). The Cytoplasmic segment spans residues 247–287 (YWKKTHPKSRPESNETTQCHGCQEENEISMLQQKEKEHLQV).

Belongs to the SCF family. As to quaternary structure, homodimer, non-covalently linked. A soluble form is produced by proteolytic processing of isoform 1 in the extracellular domain.

The protein localises to the cell membrane. Its subcellular location is the secreted. The protein resides in the cytoplasm. It is found in the cytoskeleton. It localises to the cell projection. The protein localises to the lamellipodium. Its subcellular location is the filopodium. Its function is as follows. Ligand for the receptor-type protein-tyrosine kinase KIT. Plays an essential role in the regulation of cell survival and proliferation, hematopoiesis, stem cell maintenance, gametogenesis, mast cell development, migration and function, and in melanogenesis. KITLG/SCF binding can activate several signaling pathways. Acts synergistically with other cytokines, probably interleukins. The protein is Kit ligand (KITLG) of Coturnix japonica (Japanese quail).